Here is a 74-residue protein sequence, read N- to C-terminus: MEKLTILLLVAAVLMSTQALIQEKRPKEKIKFLSKRKSIPESWWEGECSGWSVHCTQHSDCCSGECTGSYCELY.

The signal sequence occupies residues 1-19 (MEKLTILLLVAAVLMSTQA). Residues 20 to 46 (LIQEKRPKEKIKFLSKRKSIPESWWEG) constitute a propeptide that is removed on maturation. 3 disulfide bridges follow: Cys48-Cys62, Cys55-Cys66, and Cys61-Cys71.

The protein belongs to the conotoxin O2 superfamily. As to expression, expressed by the venom duct.

The protein resides in the secreted. The polypeptide is Conotoxin VnMEKL-0222 (Conus ventricosus (Mediterranean cone)).